Consider the following 219-residue polypeptide: Large ribosomal subunit protein bL25 (219 aa).

Residues 195-219 (EETTTTETSNEPEVIKKGKKEEEEK) form a disordered region. Low complexity predominate over residues 197–206 (TTTTETSNEP). The segment covering 207 to 219 (EVIKKGKKEEEEK) has biased composition (basic and acidic residues).

The protein belongs to the bacterial ribosomal protein bL25 family. CTC subfamily. As to quaternary structure, part of the 50S ribosomal subunit; part of the 5S rRNA/L5/L18/L25 subcomplex. Contacts the 5S rRNA. Binds to the 5S rRNA independently of L5 and L18.

Functionally, this is one of the proteins that binds to the 5S RNA in the ribosome where it forms part of the central protuberance. The protein is Large ribosomal subunit protein bL25 of Fervidobacterium nodosum (strain ATCC 35602 / DSM 5306 / Rt17-B1).